The sequence spans 96 residues: MHRKMAVKTLSVWLLLVGTLVPQHCCQHWSYGLSPGGKRQLDSLSQTLGNVVEEFPRVDSPCSVLGGAEESPFAGIYRMKGFLGSITDRGNRTQNI.

The first 26 residues, 1 to 26 (MHRKMAVKTLSVWLLLVGTLVPQHCC), serve as a signal peptide directing secretion. Residue glutamine 27 is modified to Pyrrolidone carboxylic acid. Residue glycine 36 is modified to Glycine amide.

It belongs to the GnRH family. As to expression, preoptic area of the brain.

It localises to the secreted. Functionally, stimulates the secretion of gonadotropins. The protein is Progonadoliberin-1 (gnrh1) of Verasper moseri (Barfin flounder).